The following is an 86-amino-acid chain: Exodeoxyribonuclease 7 small subunit (86 aa).

The protein belongs to the XseB family. In terms of assembly, heterooligomer composed of large and small subunits.

It is found in the cytoplasm. It catalyses the reaction Exonucleolytic cleavage in either 5'- to 3'- or 3'- to 5'-direction to yield nucleoside 5'-phosphates.. In terms of biological role, bidirectionally degrades single-stranded DNA into large acid-insoluble oligonucleotides, which are then degraded further into small acid-soluble oligonucleotides. This Xanthomonas euvesicatoria pv. vesicatoria (strain 85-10) (Xanthomonas campestris pv. vesicatoria) protein is Exodeoxyribonuclease 7 small subunit.